The following is a 547-amino-acid chain: Sesterfisheric acid synthase (547 aa).

A helical membrane pass occupies residues 19–39; the sequence is IMGCSLGTGLLVSMIIYNYFF. 2 N-linked (GlcNAc...) asparagine glycosylation sites follow: Asn341 and Asn404. Position 490 (Cys490) interacts with heme.

This sequence belongs to the cytochrome P450 family. Heme is required as a cofactor.

The protein resides in the membrane. It carries out the reaction sesterfisherol + 3 reduced [NADPH--hemoprotein reductase] + 3 O2 = sesterfisherate + 3 oxidized [NADPH--hemoprotein reductase] + 4 H2O + 4 H(+). It functions in the pathway secondary metabolite biosynthesis; terpenoid biosynthesis. Cytochrome P450 monooxygenase; part of the gene cluster that mediates the biosynthesis of sesterfisheric acid. The bifunctional terpene synthase NfSS converts DMAPP and IPP, and also GGPP, into sesterfisherol. The C-terminal prenyltransferase (PT) domain of NfSS catalyzes formation of GFPP, whereas the N-terminal terpene cyclase (TC) domain catalyzes the cyclization of GFPP to sesterfisherol. The cytochrome P450 monooxygenase NfP450 then catalyzes oxidative modifications of sesterfisherol into sesterfisheric acid. The polypeptide is Sesterfisheric acid synthase (Neosartorya fischeri (strain ATCC 1020 / DSM 3700 / CBS 544.65 / FGSC A1164 / JCM 1740 / NRRL 181 / WB 181) (Aspergillus fischerianus)).